The primary structure comprises 1374 residues: Probable ATP-dependent RNA helicase spindle-E (1374 aa).

In terms of domain architecture, Helicase ATP-binding spans 46–212 (LARIRENPVI…FKTPKKVGYL (167 aa)). Residue 59–66 (GPTGCGKT) coordinates ATP. The DEAH box signature appears at 158 to 161 (DEIH). A Helicase C-terminal domain is found at 265 to 447 (VCDRLIENMH…NVILKAKLLE (183 aa)). Residues 866 to 931 (QFAVGQMVAA…RKLDGPLAYM (66 aa)) form the Tudor domain.

The protein belongs to the DEAD box helicase family. DEAH subfamily.

The protein resides in the cytoplasm. It carries out the reaction ATP + H2O = ADP + phosphate + H(+). Probable ATP-binding RNA helicase which plays a central role during gametogenesis by repressing transposable elements and preventing their mobilization, which is essential for the germline integrity. Acts via the piRNA metabolic process, which mediates the repression of transposable elements during meiosis by forming complexes composed of piRNAs and Piwi proteins and govern the methylation and subsequent repression of transposons. The protein is Probable ATP-dependent RNA helicase spindle-E (spn-E) of Aedes aegypti (Yellowfever mosquito).